A 492-amino-acid chain; its full sequence is Metal cation symporter ZIP14 (492 aa).

A signal peptide spans 1-30 (MKLLLLHPAFQSCLLLTLLGLWRTTPEAHA). Topologically, residues 31–157 (SSLGAPAISA…PSAVEVWGYG (127 aa)) are extracellular. N-linked (GlcNAc...) asparagine glycosylation is found at N77, N87, and N102. A helical membrane pass occupies residues 158-178 (LLCVTVISLCSLLGASVVPFM). At 179–186 (KKTFYKRL) the chain is on the cytoplasmic side. A helical transmembrane segment spans residues 187–207 (LLYFIALAIGTLYSNALFQLI). At 208–224 (PEAFGFNPLEDYYVSKS) the chain is on the extracellular side. Residues 225 to 245 (AVVFGGFYLFFFTEKILKILL) form a helical membrane-spanning segment. The Cytoplasmic portion of the chain corresponds to 246–397 (KQKNEHHHGH…LLNAGMSIQQ (152 aa)). The HHHGHXHX-motif signature appears at 251–258 (HHHGHSHY). The XEXPHE-motif motif lies at 376–381 (EEFPHE). A helical transmembrane segment spans residues 398–418 (ALFFNFLSACCCYLGLAFGIL). Residues 419-424 (AGSHFS) lie on the Extracellular side of the membrane. The helical transmembrane segment at 425-445 (ANWIFALAGGMFLYISLADMF) threads the bilayer. Over 446–460 (PEMNEVCQEDERKGS) the chain is Cytoplasmic. A helical transmembrane segment spans residues 461-481 (ILIPFIIQNLGLLTGFTIMVV). The Extracellular portion of the chain corresponds to 482–492 (LTMYSGQIQIG).

Belongs to the ZIP transporter (TC 2.A.5) family. As to quaternary structure, homotrimer. Ubiquitinated. Ubiquitination occurs upon iron depletion. The ubiquitinated form undergoes proteasomal degradation. Post-translationally, N-glycosylated. N-glycosylation at Asn-102 is required for iron-regulated extraction of the transporter from membranes and subsequent proteasomal degradation. In terms of tissue distribution, ubiquitously expressed, with higher expression in liver, pancreas, fetal liver, thyroid gland, left and right ventricle, right atrium and fetal heart. Weakly expressed in spleen, thymus, and peripheral blood leukocytes. Expressed in liver and in brain by large neurons in the globus pallidus, the insular cortex and the dentate nucleus and to a lower extent in the putamen and the caudate nucleus (at protein level). Expressed in osteoblasts and giant osteoclast-like cells, but not in osteocytes found osteoblastoma and giant cell tumors (at protein level). Expressed by microvascular capillary endothelial cells that constitute the blood-brain barrier (at protein level). Expressed by macrophages. Widely expressed but not detected in brain, heart, skeletal muscle, placenta and fetal skin.

Its subcellular location is the cell membrane. It localises to the apical cell membrane. The protein resides in the basolateral cell membrane. The protein localises to the early endosome membrane. It is found in the late endosome membrane. Its subcellular location is the lysosome membrane. The catalysed reaction is Zn(2+)(out) + 2 hydrogencarbonate(out) = Zn(2+)(in) + 2 hydrogencarbonate(in). The enzyme catalyses Mn(2+)(out) + 2 hydrogencarbonate(out) = Mn(2+)(in) + 2 hydrogencarbonate(in). It catalyses the reaction Fe(2+)(out) + 2 hydrogencarbonate(out) = Fe(2+)(in) + 2 hydrogencarbonate(in). It carries out the reaction Cd(2+)(out) + 2 hydrogencarbonate(out) = Cd(2+)(in) + 2 hydrogencarbonate(in). In terms of biological role, electroneutral transporter of the plasma membrane mediating the cellular uptake of the divalent metal cations zinc, manganese and iron that are important for tissue homeostasis, metabolism, development and immunity. Functions as an energy-dependent symporter, transporting through the membranes an electroneutral complex composed of a divalent metal cation and two bicarbonate anions. Beside these endogenous cellular substrates, can also import cadmium a non-essential metal which is cytotoxic and carcinogenic. Controls the cellular uptake by the intestinal epithelium of systemic zinc, which is in turn required to maintain tight junctions and the intestinal permeability. Modifies the activity of zinc-dependent phosphodiesterases, thereby indirectly regulating G protein-coupled receptor signaling pathways important for gluconeogenesis and chondrocyte differentiation. Regulates insulin receptor signaling, glucose uptake, glycogen synthesis and gluconeogenesis in hepatocytes through the zinc-dependent intracellular catabolism of insulin. Through zinc cellular uptake also plays a role in the adaptation of cells to endoplasmic reticulum stress. Major manganese transporter of the basolateral membrane of intestinal epithelial cells, it plays a central role in manganese systemic homeostasis through intestinal manganese uptake. Also involved in manganese extracellular uptake by cells of the blood-brain barrier. May also play a role in manganese and zinc homeostasis participating in their elimination from the blood through the hepatobiliary excretion. Also functions in the extracellular uptake of free iron. May also function intracellularly and mediate the transport from endosomes to cytosol of iron endocytosed by transferrin. Plays a role in innate immunity by regulating the expression of cytokines by activated macrophages. This Homo sapiens (Human) protein is Metal cation symporter ZIP14.